The following is a 396-amino-acid chain: Activity-regulated cytoskeleton-associated protein (396 aa).

Residues 54-78 are a coiled coil; that stretch reads SKQVERELKGLHRSVGKLESNLDGY. The interaction with SH3GL1 or SH3GL3 stretch occupies residues 89 to 100; it reads KSIKACLCRCQE. The tract at residues 195-214 is interaction with DNM2; the sequence is QPWVPGEDGQPSPGVDTQIF. Residue Ser-260 is modified to Phosphoserine. Glycyl lysine isopeptide (Lys-Gly) (interchain with G-Cter in ubiquitin) cross-links involve residues Lys-268 and Lys-269. Thr-278 carries the post-translational modification Phosphothreonine. The disordered stretch occupies residues 356–396; it reads QDDLEQAAEPAGPHLPVEDEAETLTPAPNSESVASDRTQPE. A compositionally biased stretch (polar residues) spans 381-396; sequence PAPNSESVASDRTQPE.

It belongs to the ARC/ARG3.1 family. As to quaternary structure, homooligomer; homooligomerizes into virion-like capsids. Interacts with SH3GL1/endophilin-2, SH3GL3/endophilin-3 and DNM2/DYN2. Interacts with CAMK2B (in the kinase inactive state); leading to target ARC to inactive synapses. Interacts with PSEN1. Palmitoylation anchors the protein into the membrane by allowing direct insertion into the hydrophobic core of the lipid bilayer. In terms of processing, ubiquitinated by UBE3A, leading to its degradation by the proteasome, thereby promoting AMPA receptors (AMPARs) expression at synapses. Ubiquitinated by RNF216 at Lys-268 and Lys-269 limiting ARC protein levels induced by synaptic activity and thus regulating ARC-dependent forms of synaptic plasticity. Post-translationally, phosphorylation at Ser-260 by CaMK2 prevents homooligomerization into virion-like capsids by disrupting an interaction surface essential for high-order oligomerization. Phosphorylation by CaMK2 inhibits synaptic activity.

Its subcellular location is the extracellular vesicle membrane. It is found in the postsynaptic cell membrane. The protein localises to the synapse. The protein resides in the postsynaptic density. It localises to the early endosome membrane. Its subcellular location is the cell projection. It is found in the dendrite. The protein localises to the cytoplasm. The protein resides in the cytoskeleton. It localises to the cell cortex. Its subcellular location is the dendritic spine. It is found in the cytoplasmic vesicle. The protein localises to the secretory vesicle. The protein resides in the acrosome. It localises to the clathrin-coated vesicle membrane. Functionally, master regulator of synaptic plasticity that self-assembles into virion-like capsids that encapsulate RNAs and mediate intercellular RNA transfer in the nervous system. ARC protein is released from neurons in extracellular vesicles that mediate the transfer of ARC mRNA into new target cells, where ARC mRNA can undergo activity-dependent translation. ARC capsids are endocytosed and are able to transfer ARC mRNA into the cytoplasm of neurons. Acts as a key regulator of synaptic plasticity: required for protein synthesis-dependent forms of long-term potentiation (LTP) and depression (LTD) and for the formation of long-term memory. Regulates synaptic plasticity by promoting endocytosis of AMPA receptors (AMPARs) in response to synaptic activity: this endocytic pathway maintains levels of surface AMPARs in response to chronic changes in neuronal activity through synaptic scaling, thereby contributing to neuronal homeostasis. Acts as a postsynaptic mediator of activity-dependent synapse elimination in the developing cerebellum by mediating elimination of surplus climbing fiber synapses. Accumulates at weaker synapses, probably to prevent their undesired enhancement. This suggests that ARC-containing virion-like capsids may be required to eliminate synaptic material. Required to transduce experience into long-lasting changes in visual cortex plasticity and for long-term memory. Involved in postsynaptic trafficking and processing of amyloid-beta A4 (APP) via interaction with PSEN1. In addition to its role in synapses, also involved in the regulation of the immune system: specifically expressed in skin-migratory dendritic cells and regulates fast dendritic cell migration, thereby regulating T-cell activation. This is Activity-regulated cytoskeleton-associated protein from Homo sapiens (Human).